We begin with the raw amino-acid sequence, 67 residues long: Large ribosomal subunit protein bL35 (67 aa).

It belongs to the bacterial ribosomal protein bL35 family.

The polypeptide is Large ribosomal subunit protein bL35 (Anaeromyxobacter sp. (strain Fw109-5)).